We begin with the raw amino-acid sequence, 1117 residues long: WD repeat and HMG-box DNA-binding protein 1 (1117 aa).

WD repeat units follow at residues 11–50, 52–91, 93–131, 134–173, 184–223, 228–267, and 271–310; these read GHTE…DPKS, NVGE…GILT, FTTN…QQQT, GHDA…CAVS, VNAK…NPFD, SISQ…CMER, and EKGY…SGKV. Residues Ser333 and Ser377 each carry the phosphoserine modification. Residue Lys390 forms a Glycyl lysine isopeptide (Lys-Gly) (interchain with G-Cter in SUMO2) linkage. Position 664 is an N6-acetyllysine (Lys664). A disordered region spans residues 816-885; the sequence is LAETQSEEEK…NLFQSANSSD (70 aa). At Thr819 the chain carries Phosphothreonine. The residue at position 821 (Ser821) is a Phosphoserine. The segment covering 861–872 has biased composition (basic and acidic residues); sequence DTVSEEKPESHN. A compositionally biased stretch (polar residues) spans 873–885; the sequence is HGQNLFQSANSSD. Ser910 and Ser923 each carry phosphoserine. Residues 911 to 1005 are disordered; it reads SKEPAVSANS…AVCLQNSENQ (95 aa). The span at 917-943 shows a compositional bias: polar residues; it reads SANSTRSANILDSMNKSSRKSTSLNRM. Lys953 bears the N6-acetyllysine mark. Polar residues predominate over residues 962-974; it reads KQASAASYFQKRT. The span at 975–987 shows a compositional bias: basic and acidic residues; that stretch reads PQADKTEEVKENP. Polar residues predominate over residues 988 to 1004; it reads KSSSSDAPAVCLQNSEN. A DNA-binding region (HMG box) is located at residues 1004 to 1073; that stretch reads NQRPKTGFQM…SDGAEAKKRK (70 aa). A Phosphoserine modification is found at Ser1030. A disordered region spans residues 1054–1074; it reads WTNKAKGETASDGAEAKKRKR. Residue Lys1116 forms a Glycyl lysine isopeptide (Lys-Gly) (interchain with G-Cter in SUMO1); alternate linkage. Residue Lys1116 forms a Glycyl lysine isopeptide (Lys-Gly) (interchain with G-Cter in SUMO2); alternate linkage.

In terms of assembly, trimer. Interacts with the polymerase alpha catalytic subunit POLA1. Interacts with MCM10. Interacts with DNA2. Interacts with CDC45 and GINS2 subunit of GINS complex; these interactions associate WDHD1 with the CMG helicase complex.

The protein resides in the nucleus. The protein localises to the nucleoplasm. Core replisome component that acts as a replication initiation factor. Binds directly to the CMG complex and functions as a hub to recruit additional proteins to the replication fork. This chain is WD repeat and HMG-box DNA-binding protein 1 (Wdhd1), found in Mus musculus (Mouse).